The following is a 581-amino-acid chain: Meiotic PUF family protein 1 (581 aa).

One can recognise a PUM-HD domain in the interval 225 to 580 (FPNGTTEPFE…RIAALVEKSK (356 aa)). Pumilio repeat units follow at residues 291-326 (TILPFSVTLMKNKFGNFLIQKCFEYSTEAQLQSFSY), 327-362 (FLKKHVKELSIDAFGSHVLQKSLEIYPERFTNNLIE), 363-398 (ELIECLPATLMQRHSCHVWQKFFETRRKSLVDGIFD), 403-438 (KMQGKWLQVSVSEMGSLVVQTIFENCKEKDKRTCLD), 439-474 (EIINNMDQIICGQWGNWVIQHIIEHGSEPDKQRILN), 475-510 (SLLKEVESYSTNRYASKVVERALRVCHVTFFDRYVK), 518-554 (ELPTIFLQEIASNQYGNYIVQYLLQVATPSQINLMAE), and 555-581 (HLKKHMVSLRGHKYGQRIAALVEKSKS).

In terms of biological role, RNA-binding protein essential for meiotic progression. The chain is Meiotic PUF family protein 1 (mpf1) from Schizosaccharomyces pombe (strain 972 / ATCC 24843) (Fission yeast).